The chain runs to 371 residues: tRNA-specific 2-thiouridylase MnmA (371 aa).

ATP-binding positions include 13-20 (GMSGGVDS) and methionine 39. The tract at residues 99–101 (NPD) is interaction with target base in tRNA. Cysteine 104 functions as the Nucleophile in the catalytic mechanism. Cysteine 104 and cysteine 200 are joined by a disulfide. Residue glycine 128 coordinates ATP. The tract at residues 150 to 152 (KDQ) is interaction with tRNA. Cysteine 200 functions as the Cysteine persulfide intermediate in the catalytic mechanism. Residues 308–309 (RY) are interaction with tRNA.

It belongs to the MnmA/TRMU family.

The protein localises to the cytoplasm. The enzyme catalyses S-sulfanyl-L-cysteinyl-[protein] + uridine(34) in tRNA + AH2 + ATP = 2-thiouridine(34) in tRNA + L-cysteinyl-[protein] + A + AMP + diphosphate + H(+). Its function is as follows. Catalyzes the 2-thiolation of uridine at the wobble position (U34) of tRNA, leading to the formation of s(2)U34. This is tRNA-specific 2-thiouridylase MnmA from Listeria monocytogenes serotype 4b (strain CLIP80459).